Consider the following 327-residue polypeptide: Undecaprenyl-phosphate 4-deoxy-4-formamido-L-arabinose transferase (327 aa).

2 consecutive transmembrane segments (helical) span residues 236–256 (LSIFGSVIALLGFAFGLLLVV) and 270–290 (VFMLFAVLFMFIGAQFVGMGL).

It belongs to the glycosyltransferase 2 family.

It is found in the cell inner membrane. The catalysed reaction is UDP-4-deoxy-4-formamido-beta-L-arabinose + di-trans,octa-cis-undecaprenyl phosphate = 4-deoxy-4-formamido-alpha-L-arabinopyranosyl di-trans,octa-cis-undecaprenyl phosphate + UDP. The protein operates within glycolipid biosynthesis; 4-amino-4-deoxy-alpha-L-arabinose undecaprenyl phosphate biosynthesis; 4-amino-4-deoxy-alpha-L-arabinose undecaprenyl phosphate from UDP-4-deoxy-4-formamido-beta-L-arabinose and undecaprenyl phosphate: step 1/2. It participates in bacterial outer membrane biogenesis; lipopolysaccharide biosynthesis. Its function is as follows. Catalyzes the transfer of 4-deoxy-4-formamido-L-arabinose from UDP to undecaprenyl phosphate. The modified arabinose is attached to lipid A and is required for resistance to polymyxin and cationic antimicrobial peptides. This is Undecaprenyl-phosphate 4-deoxy-4-formamido-L-arabinose transferase from Klebsiella pneumoniae subsp. pneumoniae (strain ATCC 700721 / MGH 78578).